Reading from the N-terminus, the 130-residue chain is Small ribosomal subunit protein uS11 (130 aa).

It belongs to the universal ribosomal protein uS11 family. Part of the 30S ribosomal subunit. Interacts with proteins S7 and S18. Binds to IF-3.

Functionally, located on the platform of the 30S subunit, it bridges several disparate RNA helices of the 16S rRNA. Forms part of the Shine-Dalgarno cleft in the 70S ribosome. The chain is Small ribosomal subunit protein uS11 from Prochlorococcus marinus subsp. pastoris (strain CCMP1986 / NIES-2087 / MED4).